Reading from the N-terminus, the 311-residue chain is MQTFTMVLEEIWTSLFMWFFYALIPCLLTDEVAILPAPQNLSVLSTNMKHLLMWSPVIAPGETVYYSVEYQGEYESLYTSHIWIPSSWCSLTEGPECDVTDDITATVPYNLRVRATLGSQTSAWSILKHPFNRNSTILTRPGMEITKDGFHLVIELEDLGPQFEFLVAYWRREPGAEEHVKMVRSGGIPVHLETMEPGAAYCVKAQTFVKAIGRYSAFSQTECVEVQGEAIPLVLALFAFVGFMLILVVVPLFVWKMGRLLQYSCCPVVVLPDTLKITNSPQKLISCRREEVDACATAVMSPEELLRAWIS.

Residues 1–29 (MQTFTMVLEEIWTSLFMWFFYALIPCLLT) form the signal peptide. Residues 30–233 (DEVAILPAPQ…VEVQGEAIPL (204 aa)) lie on the Extracellular side of the membrane. Fibronectin type-III domains are found at residues 37 to 136 (APQN…RNST) and 144 to 228 (EITK…EVQG). A glycan (N-linked (GlcNAc...) asparagine) is linked at N40. A disulfide bridge links C89 with C97. A glycan (N-linked (GlcNAc...) asparagine) is linked at N134. Cysteines 202 and 223 form a disulfide. A helical transmembrane segment spans residues 234-254 (VLALFAFVGFMLILVVVPLFV). Residues 255–311 (WKMGRLLQYSCCPVVVLPDTLKITNSPQKLISCRREEVDACATAVMSPEELLRAWIS) are Cytoplasmic-facing.

The protein belongs to the type II cytokine receptor family. As to quaternary structure, heterodimer with IL20RA and heterodimer with IL22RA1. Widely expressed with highest levels in skin and testis. Highly expressed in psoriatic skin.

The protein resides in the membrane. Functionally, the IL20RA/IL20RB dimer is a receptor for IL19, IL20 and IL24. The IL22RA1/IL20RB dimer is a receptor for IL20 and IL24. This is Interleukin-20 receptor subunit beta (IL20RB) from Homo sapiens (Human).